Reading from the N-terminus, the 400-residue chain is MAP kinase-activated protein kinase 2 (400 aa).

Residues 1–43 (MLSNSQGQSPPVPFPAPAPPPQPPTPALPHPPAQPPPPPPQQF) are disordered. S9 carries the post-translational modification Phosphoserine. Residues 10–42 (PPVPFPAPAPPPQPPTPALPHPPAQPPPPPPQQ) are compositionally biased toward pro residues. T25 bears the Phosphothreonine mark. A Protein kinase domain is found at 64–325 (KVTSQVLGLG…ITEFMNHPWI (262 aa)). ATP is bound by residues 70–78 (LGLGINGKV) and K93. 139–141 (ECL) contributes to the staurosporine binding site. The active-site Proton acceptor is the D186. At T222 the chain carries Phosphothreonine; by MAPK14. S272 is modified (phosphoserine; by MAPK14). The residue at position 328 (S328) is a Phosphoserine; by autocatalysis. Positions 328 to 364 (STKVPQTPLHTSRVLKEDKERWEDVKEEMTSALATMR) are autoinhibitory helix. T334 carries the phosphothreonine; by MAPK14 modification. Residue K353 forms a Glycyl lysine isopeptide (Lys-Gly) (interchain with G-Cter in SUMO) linkage. Positions 356–365 (MTSALATMRV) match the Nuclear export signal (NES) motif. The p38 MAPK-binding site stretch occupies residues 366-390 (DYEQIKIKKIEDASNPLLLKRRKKA). 2 short sequence motifs (bipartite nuclear localization signal) span residues 371–374 (KIKK) and 385–389 (KRRKK).

Belongs to the protein kinase superfamily. CAMK Ser/Thr protein kinase family. Heterodimer with p38-alpha/MAPK14; this heterodimer forms a stable complex: molecules are positioned 'face to face' so that the ATP-binding sites of both kinases are at the heterodimer interface. Interacts with PHC2. Interacts with HSF1. In terms of processing, sumoylation inhibits the protein kinase activity. Post-translationally, phosphorylated and activated by MAP kinase p38-alpha/MAPK14 at Thr-222, Ser-272 and Thr-334. As to expression, expressed in all tissues examined.

It localises to the cytoplasm. The protein localises to the nucleus. It carries out the reaction L-seryl-[protein] + ATP = O-phospho-L-seryl-[protein] + ADP + H(+). It catalyses the reaction L-threonyl-[protein] + ATP = O-phospho-L-threonyl-[protein] + ADP + H(+). Activated following phosphorylation by p38-alpha/MAPK14 following various stresses. Inhibited following sumoylation. Specifically inhibited by pyrrolopyridine inhibitors. Functionally, stress-activated serine/threonine-protein kinase involved in cytokine production, endocytosis, reorganization of the cytoskeleton, cell migration, cell cycle control, chromatin remodeling, DNA damage response and transcriptional regulation. Following stress, it is phosphorylated and activated by MAP kinase p38-alpha/MAPK14, leading to phosphorylation of substrates. Phosphorylates serine in the peptide sequence, Hyd-X-R-X(2)-S, where Hyd is a large hydrophobic residue. Phosphorylates ALOX5, CDC25B, CDC25C, CEP131, ELAVL1, HNRNPA0, HSP27/HSPB1, KRT18, KRT20, LIMK1, LSP1, PABPC1, PARN, PDE4A, RCSD1, RPS6KA3, TAB3 and TTP/ZFP36. Phosphorylates HSF1; leading to the interaction with HSP90 proteins and inhibiting HSF1 homotrimerization, DNA-binding and transactivation activities. Mediates phosphorylation of HSP27/HSPB1 in response to stress, leading to the dissociation of HSP27/HSPB1 from large small heat-shock protein (sHsps) oligomers and impairment of their chaperone activities and ability to protect against oxidative stress effectively. Involved in inflammatory response by regulating tumor necrosis factor (TNF) and IL6 production post-transcriptionally: acts by phosphorylating AU-rich elements (AREs)-binding proteins ELAVL1, HNRNPA0, PABPC1 and TTP/ZFP36, leading to the regulation of the stability and translation of TNF and IL6 mRNAs. Phosphorylation of TTP/ZFP36, a major post-transcriptional regulator of TNF, promotes its binding to 14-3-3 proteins and reduces its ARE mRNA affinity, leading to inhibition of dependent degradation of ARE-containing transcripts. Phosphorylates CEP131 in response to cellular stress induced by ultraviolet irradiation which promotes binding of CEP131 to 14-3-3 proteins and inhibits formation of novel centriolar satellites. Also involved in late G2/M checkpoint following DNA damage through a process of post-transcriptional mRNA stabilization: following DNA damage, relocalizes from nucleus to cytoplasm and phosphorylates HNRNPA0 and PARN, leading to stabilization of GADD45A mRNA. Involved in toll-like receptor signaling pathway (TLR) in dendritic cells: required for acute TLR-induced macropinocytosis by phosphorylating and activating RPS6KA3. In Homo sapiens (Human), this protein is MAP kinase-activated protein kinase 2 (MAPKAPK2).